A 474-amino-acid chain; its full sequence is Glutamate--tRNA ligase (474 aa).

The 'HIGH' region signature appears at 9 to 19 (PSPTGFLHVGG). The 'KMSKS' region motif lies at 240 to 244 (KLSKR). Lys-243 serves as a coordination point for ATP.

It belongs to the class-I aminoacyl-tRNA synthetase family. Glutamate--tRNA ligase type 1 subfamily. As to quaternary structure, monomer.

It is found in the cytoplasm. The enzyme catalyses tRNA(Glu) + L-glutamate + ATP = L-glutamyl-tRNA(Glu) + AMP + diphosphate. Catalyzes the attachment of glutamate to tRNA(Glu) in a two-step reaction: glutamate is first activated by ATP to form Glu-AMP and then transferred to the acceptor end of tRNA(Glu). This Photobacterium profundum (strain SS9) protein is Glutamate--tRNA ligase.